The following is a 225-amino-acid chain: Orotate phosphoribosyltransferase (225 aa).

Lys-29 contacts 5-phospho-alpha-D-ribose 1-diphosphate. 37 to 38 (FF) serves as a coordination point for orotate. 5-phospho-alpha-D-ribose 1-diphosphate is bound by residues 75–76 (YK), Arg-101, Lys-102, Lys-105, His-107, and 126–134 (DDVISAGTS). Orotate is bound by residues Ser-130 and Arg-158.

The protein belongs to the purine/pyrimidine phosphoribosyltransferase family. PyrE subfamily. In terms of assembly, homodimer. Mg(2+) is required as a cofactor.

It carries out the reaction orotidine 5'-phosphate + diphosphate = orotate + 5-phospho-alpha-D-ribose 1-diphosphate. It participates in pyrimidine metabolism; UMP biosynthesis via de novo pathway; UMP from orotate: step 1/2. Its function is as follows. Catalyzes the transfer of a ribosyl phosphate group from 5-phosphoribose 1-diphosphate to orotate, leading to the formation of orotidine monophosphate (OMP). In Ralstonia pickettii (strain 12J), this protein is Orotate phosphoribosyltransferase.